A 98-amino-acid polypeptide reads, in one-letter code: Prostate and testis expressed protein 3 (98 aa).

An N-terminal signal peptide occupies residues 1–20 (MNKHFLLLFSLFYFIVEATS). The UPAR/Ly6 domain occupies 21-97 (LKCVTCHLRT…CCNSDFCNFR (77 aa)). Cystine bridges form between Cys-23-Cys-50, Cys-26-Cys-35, Cys-42-Cys-68, and Cys-72-Cys-88.

Belongs to the PATE family.

It localises to the secreted. This chain is Prostate and testis expressed protein 3 (Pate3), found in Mus musculus (Mouse).